We begin with the raw amino-acid sequence, 635 residues long: Probable ethylene response sensor 2 (635 aa).

Transmembrane regions (helical) follow at residues 24-44 (ISDF…IYFV), 59-79 (FGAF…TFAI), and 94-114 (ATAV…PDLL). Cysteine 66 and histidine 70 together coordinate Cu cation. Residues 159 to 308 (DRHTILRTTL…VVADQVAVAL (150 aa)) enclose the GAF domain. In terms of domain architecture, Histidine kinase spans 351 to 589 (VMNHEMRTPM…MFFVKLGMPE (239 aa)). Histidine 354 bears the Phosphohistidine; by autocatalysis mark.

Belongs to the ethylene receptor family. Homodimer. Cu cation serves as cofactor. As to expression, expressed in anthers and hulls.

It is found in the endoplasmic reticulum membrane. It catalyses the reaction ATP + protein L-histidine = ADP + protein N-phospho-L-histidine.. Its function is as follows. Ethylene receptor related to bacterial two-component regulators. Acts as a negative regulator of ethylene signaling. May play a role in the regulation of flowering by up-regulating GI (GIGANTEA) and RCN1 and regulate starch accumulation by down-regulating the alpha-amylase AMY3D. In Oryza sativa subsp. indica (Rice), this protein is Probable ethylene response sensor 2.